The following is a 272-amino-acid chain: 2-amino-3,7-dideoxy-D-threo-hept-6-ulosonate synthase (272 aa).

Residue aspartate 33 is the Proton acceptor of the active site. 1-deoxy-D-threo-hexo-2,5-diulose 6-phosphate is bound by residues 33–37 (DHGVS) and 153–155 (YPR). The Proton donor role is filled by tyrosine 153. Lysine 184 acts as the Schiff-base intermediate with substrate in catalysis. Residues 209–210 (GG) and 237–238 (GR) each bind 1-deoxy-D-threo-hexo-2,5-diulose 6-phosphate.

Belongs to the DeoC/FbaB aldolase family. ADHS subfamily. As to quaternary structure, homodecamer.

It carries out the reaction 1-deoxy-D-threo-hexo-2,5-diulose 6-phosphate + L-aspartate 4-semialdehyde = 2,3-dioxopropyl phosphate + 2-amino-2,3,7-trideoxy-D-lyxo-hept-6-ulosonate. In terms of biological role, catalyzes a transaldol reaction between 6-deoxy-5-ketofructose 1-phosphate (DKFP) and L-aspartate semialdehyde (ASA) with an elimination of hydroxypyruvaldehyde phosphate to yield 2-amino-3,7-dideoxy-D-threo-hept-6-ulosonate (ADH). Plays a key role in an alternative pathway of the biosynthesis of 3-dehydroquinate (DHQ), which is involved in the canonical pathway for the biosynthesis of aromatic amino acids. This Methanococcus maripaludis (strain C7 / ATCC BAA-1331) protein is 2-amino-3,7-dideoxy-D-threo-hept-6-ulosonate synthase.